Consider the following 380-residue polypeptide: Kappa-type opioid receptor (380 aa).

Residues Met1–Ala57 lie on the Extracellular side of the membrane. Asn25 and Asn39 each carry an N-linked (GlcNAc...) asparagine glycan. The chain crosses the membrane as a helical span at residues Ile58–Ile85. Residues Arg86–Asn95 lie on the Cytoplasmic side of the membrane. A helical membrane pass occupies residues Ile96–Tyr119. The Extracellular portion of the chain corresponds to Leu120–Lys132. A disulfide bridge connects residues Cys131 and Cys210. Residues Ile133–Val154 form a helical membrane-spanning segment. Residues Asp155–Leu173 are Cytoplasmic-facing. Residues Lys174–Leu196 traverse the membrane as a helical segment. At Gly197–Trp222 the chain is on the extracellular side. The chain crosses the membrane as a helical span at residues Asp223–Thr247. At Leu248–Lys274 the chain is on the cytoplasmic side. The chain crosses the membrane as a helical span at residues Leu275–Val296. Residues Glu297–Ser311 lie on the Extracellular side of the membrane. Residues Tyr312–Leu333 form a helical membrane-spanning segment. Residues Asp334–Val380 lie on the Cytoplasmic side of the membrane. The S-palmitoyl cysteine moiety is linked to residue Cys345.

This sequence belongs to the G-protein coupled receptor 1 family. As to quaternary structure, interacts with NHERF1. Interacts with GABARAPL1.

The protein localises to the cell membrane. In terms of biological role, G-protein coupled opioid receptor that functions as a receptor for endogenous alpha-neoendorphins and dynorphins, but has low affinity for beta-endorphins. Also functions as a receptor for various synthetic opioids and for the psychoactive diterpene salvinorin A. Ligand binding causes a conformation change that triggers signaling via guanine nucleotide-binding proteins (G proteins) and modulates the activity of down-stream effectors, such as adenylate cyclase. Signaling leads to the inhibition of adenylate cyclase activity. Inhibits neurotransmitter release by reducing calcium ion currents and increasing potassium ion conductance. Plays a role in the perception of pain. Plays a role in mediating reduced physical activity upon treatment with synthetic opioids. Plays a role in the regulation of salivation in response to synthetic opioids. May play a role in arousal and regulation of autonomic and neuroendocrine functions. In Rattus norvegicus (Rat), this protein is Kappa-type opioid receptor (Oprk1).